A 217-amino-acid polypeptide reads, in one-letter code: Urease accessory protein UreE (217 aa).

Residues 148–217 (AYGEAAAHGH…DHDHGSGHHH (70 aa)) form a disordered region. A compositionally biased stretch (basic and acidic residues) spans 160-171 (AGHDHAHDHDHG). Residues 193 to 202 (AAAPAPHVHG) show a composition bias toward low complexity. Residues 206-217 (GHDHDHGSGHHH) are compositionally biased toward basic and acidic residues.

The protein belongs to the UreE family.

It localises to the cytoplasm. In terms of biological role, involved in urease metallocenter assembly. Binds nickel. Probably functions as a nickel donor during metallocenter assembly. The chain is Urease accessory protein UreE from Methylibium petroleiphilum (strain ATCC BAA-1232 / LMG 22953 / PM1).